The primary structure comprises 560 residues: Membrane protein insertase YidC (560 aa).

A run of 6 helical transmembrane segments spans residues 5-25 (IINL…WQYF), 334-354 (AIDF…MNFF), 357-377 (YVGN…LLMF), 431-451 (LPIL…YVTI), 476-496 (LFGL…WPIL), and 522-542 (FMPL…LIYW).

This sequence belongs to the OXA1/ALB3/YidC family. Type 1 subfamily. In terms of assembly, interacts with the Sec translocase complex via SecD. Specifically interacts with transmembrane segments of nascent integral membrane proteins during membrane integration.

It localises to the cell inner membrane. In terms of biological role, required for the insertion and/or proper folding and/or complex formation of integral membrane proteins into the membrane. Involved in integration of membrane proteins that insert both dependently and independently of the Sec translocase complex, as well as at least some lipoproteins. Aids folding of multispanning membrane proteins. This is Membrane protein insertase YidC from Rickettsia africae (strain ESF-5).